Consider the following 352-residue polypeptide: Ribosomal lysine N-methyltransferase 5 (352 aa).

Residues Trp-107, 161-163, Asp-183, Trp-244, and Leu-274 each bind S-adenosyl-L-methionine; that span reads GSG.

The protein belongs to the class I-like SAM-binding methyltransferase superfamily. RKM5 family.

Functionally, S-adenosyl-L-methionine-dependent protein-lysine N-methyltransferase that methylates 60S ribosomal protein L1. The sequence is that of Ribosomal lysine N-methyltransferase 5 (RKM5) from Candida glabrata (strain ATCC 2001 / BCRC 20586 / JCM 3761 / NBRC 0622 / NRRL Y-65 / CBS 138) (Yeast).